Reading from the N-terminus, the 148-residue chain is Lysozyme C-1 (148 aa).

Residues 1–18 form the signal peptide; sequence MKALLVLGFLLLSASVQA. In terms of domain architecture, C-type lysozyme spans 19-148; that stretch reads KIYERCQFAR…LSGYIRNCGV (130 aa). Disulfide bonds link Cys24–Cys146, Cys48–Cys134, Cys83–Cys99, and Cys95–Cys113. Residues Glu53 and Asp71 contribute to the active site.

Belongs to the glycosyl hydrolase 22 family. As to quaternary structure, monomer. Expressed in lung, small intestine and spleen.

Its subcellular location is the secreted. The catalysed reaction is Hydrolysis of (1-&gt;4)-beta-linkages between N-acetylmuramic acid and N-acetyl-D-glucosamine residues in a peptidoglycan and between N-acetyl-D-glucosamine residues in chitodextrins.. Lysozymes have primarily a bacteriolytic function; those in tissues and body fluids are associated with the monocyte-macrophage system and enhance the activity of immunoagents. In the intestine they may also have a digestive function. The sequence is that of Lysozyme C-1 (Lyz1) from Rattus norvegicus (Rat).